We begin with the raw amino-acid sequence, 189 residues long: Peptidyl-tRNA hydrolase (189 aa).

His-14 lines the tRNA pocket. The active-site Proton acceptor is His-19. TRNA is bound by residues Tyr-64, Asn-66, and Asn-112.

Belongs to the PTH family. As to quaternary structure, monomer.

It is found in the cytoplasm. It catalyses the reaction an N-acyl-L-alpha-aminoacyl-tRNA + H2O = an N-acyl-L-amino acid + a tRNA + H(+). In terms of biological role, hydrolyzes ribosome-free peptidyl-tRNAs (with 1 or more amino acids incorporated), which drop off the ribosome during protein synthesis, or as a result of ribosome stalling. Catalyzes the release of premature peptidyl moieties from peptidyl-tRNA molecules trapped in stalled 50S ribosomal subunits, and thus maintains levels of free tRNAs and 50S ribosomes. The protein is Peptidyl-tRNA hydrolase of Chlorobium phaeobacteroides (strain BS1).